A 739-amino-acid polypeptide reads, in one-letter code: Homeobox protein SIX5 (739 aa).

Composition is skewed to low complexity over residues 1–24 (MATL…AAAA), 34–61 (QLLQ…AAGA), and 74–83 (PEAASEPPTG). Disordered stretches follow at residues 1–84 (MATL…PTGL), 251–294 (NRRQ…AAPV), 361–381 (LTGG…SETK), and 617–650 (LSAQ…FPAP). Positions 201-260 (GEETVYCFKERSRAALKACYRGNRYPTPDEKRRLATLTGLSLTQVSNWFKNRRQRDRTGA) form a DNA-binding region, homeobox. The segment covering 279-289 (ESSRSPEDLER) has biased composition (basic and acidic residues). The segment covering 617-646 (LSAQQPPPAAATTSSTSLPFSPDSPGLLPN) has biased composition (low complexity).

It belongs to the SIX/Sine oculis homeobox family. Probably binds DNA dimer. Interacts with EYA3, and probably EYA1 and EYA2. Expressed in adult but not in fetal eyes. Found in corneal epithelium and endothelium, lens epithelium, ciliary body epithelia, cellular layers of the retina and the sclera.

The protein localises to the cytoplasm. It is found in the nucleus. Functionally, transcription factor that is thought to be involved in regulation of organogenesis. May be involved in determination and maintenance of retina formation. Binds a 5'-GGTGTCAG-3' motif present in the ARE regulatory element of ATP1A1. Binds a 5'-TCA[AG][AG]TTNC-3' motif present in the MEF3 element in the myogenin promoter, and in the IGFBP5 promoter. Thought to be regulated by association with Dach and Eya proteins, and seems to be coactivated by EYA1, EYA2 and EYA3. This Homo sapiens (Human) protein is Homeobox protein SIX5 (SIX5).